A 306-amino-acid polypeptide reads, in one-letter code: Ornithine carbamoyltransferase (306 aa).

Residues 54–57, Gln81, Arg105, and 132–135 each bind carbamoyl phosphate; these read STRT and HPLQ. Residues Asn162, Asp226, and 230-231 each bind L-ornithine; that span reads SM. Carbamoyl phosphate contacts are provided by residues 266–267 and Arg294; that span reads CL.

Belongs to the aspartate/ornithine carbamoyltransferase superfamily. OTCase family.

The protein localises to the cytoplasm. It catalyses the reaction carbamoyl phosphate + L-ornithine = L-citrulline + phosphate + H(+). It participates in amino-acid biosynthesis; L-arginine biosynthesis; L-arginine from L-ornithine and carbamoyl phosphate: step 1/3. Reversibly catalyzes the transfer of the carbamoyl group from carbamoyl phosphate (CP) to the N(epsilon) atom of ornithine (ORN) to produce L-citrulline. The chain is Ornithine carbamoyltransferase from Sulfolobus acidocaldarius (strain ATCC 33909 / DSM 639 / JCM 8929 / NBRC 15157 / NCIMB 11770).